The following is a 230-amino-acid chain: Extracellular ribonuclease LE (230 aa).

The first 25 residues, 1-25 (MASNSAFSLFLILLIITQCLSVLNA), serve as a signal peptide directing secretion. RNA is bound at residue glutamine 37. Intrachain disulfides connect cysteine 43–cysteine 49, cysteine 50–cysteine 106, cysteine 79–cysteine 125, cysteine 186–cysteine 221, and cysteine 202–cysteine 213. RNA is bound by residues histidine 64, phenylalanine 114, 117-118 (HE), and 121-122 (KH). The active-site Proton donor is the histidine 64. Residue glutamate 118 is part of the active site. Residue histidine 122 is the Proton acceptor of the active site.

This sequence belongs to the RNase T2 family.

It localises to the secreted. The protein resides in the extracellular space. The protein localises to the cell wall. The enzyme catalyses a ribonucleotidyl-ribonucleotide-RNA + H2O = a 3'-end 3'-phospho-ribonucleotide-RNA + a 5'-end dephospho-ribonucleoside-RNA + H(+). In terms of biological role, probably involved in plant phosphate-starvation rescue system. This Solanum lycopersicum (Tomato) protein is Extracellular ribonuclease LE.